The sequence spans 309 residues: Xylose/arabinose import permease protein XacI (309 aa).

6 helical membrane-spanning segments follow: residues 29 to 49 (LVVFFLGFFLVPLETGIMTAI), 89 to 109 (LIMSIPATIGSVLFGSMAAYG), 121 to 141 (MLMLFVVGVFVPYQAVLVPLA), 170 to 190 (ELVPLVITHIAYGIPICTILF), 227 to 247 (MFGVVFIYQFTQIYNEFLFAF), and 282 to 302 (AAFLAAVPTLILYVAFAEQFA). The region spanning 85 to 297 (FFNSLIMSIP…VPTLILYVAF (213 aa)) is the ABC transmembrane type-1 domain.

Belongs to the binding-protein-dependent transport system permease family. In terms of assembly, the complex is composed of two ATP-binding proteins (XacJ and XacK), two transmembrane proteins (XacH and XacI) and a solute-binding protein (XacG).

It is found in the cell membrane. Functionally, part of the ABC transporter complex XacGHIJK involved in the uptake of xylose and arabinose. Responsible for the translocation of the substrate across the membrane. The sequence is that of Xylose/arabinose import permease protein XacI from Haloferax volcanii (strain ATCC 29605 / DSM 3757 / JCM 8879 / NBRC 14742 / NCIMB 2012 / VKM B-1768 / DS2) (Halobacterium volcanii).